The chain runs to 238 residues: Cadherin-2 (238 aa).

Cadherin domains are found at residues Thr-1 to Phe-46, Leu-47 to Phe-161, and Thr-162 to Val-238. The Extracellular portion of the chain corresponds to Thr-1–Val-238. Residues Asp-5, Glu-7, Asp-38, Met-39, Asn-40, Asp-41, and Asn-42 each contribute to the Ca(2+) site. Asn-52 is a glycosylation site (N-linked (GlcNAc...) asparagine). Ca(2+) is bound by residues Asp-72, Asp-74, and Asn-80. N-linked (GlcNAc...) asparagine glycosylation is present at Asn-104. Position 132 (Asp-132) interacts with Ca(2+). The N-linked (GlcNAc...) asparagine glycan is linked to Asn-181.

In terms of assembly, homodimer (via extracellular region). Can also form heterodimers with other cadherins (via extracellular region). Dimerization occurs in trans, i.e. with a cadherin chain from another cell. Interacts with CDCP1. Interacts with PCDH8; this complex may also include TAOK2. The interaction with PCDH8 may lead to internalization through TAOK2/p38 MAPK pathway. Identified in a complex containing FGFR4, NCAM1, CDH2, PLCG1, FRS2, SRC, SHC1, GAP43 and CTTN. May interact with OBSCN (via protein kinase domain 2). Post-translationally, cleaved by MMP24. Ectodomain cleavage leads to the generation of a soluble 90 kDa N-terminal soluble fragment and a 45 kDa membrane-bound C-terminal fragment 1 (CTF1), which is further cleaved by gamma-secretase into a 35 kDa. Cleavage in neural stem cells by MMP24 affects CDH2-mediated anchorage of neural stem cells to ependymocytes in the adult subependymal zone, leading to modulate neural stem cell quiescence. In terms of processing, may be phosphorylated by OBSCN.

Its subcellular location is the cell membrane. The protein resides in the sarcolemma. It is found in the cell junction. It localises to the cell surface. The protein localises to the desmosome. Its subcellular location is the adherens junction. In terms of biological role, calcium-dependent cell adhesion protein; preferentially mediates homotypic cell-cell adhesion by dimerization with a CDH2 chain from another cell. Cadherins may thus contribute to the sorting of heterogeneous cell types. Acts as a regulator of neural stem cells quiescence by mediating anchorage of neural stem cells to ependymocytes in the adult subependymal zone: upon cleavage by MMP24, CDH2-mediated anchorage is affected, leading to modulate neural stem cell quiescence. Plays a role in cell-to-cell junction formation between pancreatic beta cells and neural crest stem (NCS) cells, promoting the formation of processes by NCS cells. Required for proper neurite branching. Required for pre- and postsynaptic organization. CDH2 may be involved in neuronal recognition mechanism. In hippocampal neurons, may regulate dendritic spine density. The protein is Cadherin-2 (CDH2) of Cricetulus griseus (Chinese hamster).